The following is a 78-amino-acid chain: RTX-VII (78 aa).

The N-terminal stretch at 1–22 (MKTIVYLIVSILLLSSTVLVLA) is a signal peptide. A propeptide spanning residues 23–40 (EGNAASHELQEYPIEEQR) is cleaved from the precursor. 4 disulfide bridges follow: Cys-42–Cys-58, Cys-47–Cys-63, Cys-57–Cys-73, and Cys-65–Cys-71. Position 76 is an arginine amide (Arg-76).

In terms of tissue distribution, expressed by the venom gland.

The protein resides in the secreted. In terms of biological role, agonist of rat Nav1.3/SCN3A. This toxin increases the peak current amplitude, and potently inhibits the fast inactivation of the channel (EC(50)=120 nM). The inhibition of fast inactivation is voltage-independent (depolarizing voltages ranging from 220 mV to 130 mV). The toxin might bind to the domain IV of the Nav1.3 channel, while domain II might not participate in interacting with the toxin but could determine the efficacy of RTX-VII. In vivo, when intracerebroventricularly injected into mice, the toxin causes involuntary body twitching (seizure-like symptoms). This is RTX-VII from Macrothele raveni (Funnel-web spider).